The following is a 333-amino-acid chain: L-lactate dehydrogenase B chain (333 aa).

Residues 29–57 and Arg99 contribute to the NAD(+) site; that span reads GQVGMACAVSILMRELADELALVDVIEDK. Residues Arg106, Asn138, and Arg169 each contribute to the substrate site. Asn138 is an NAD(+) binding site. The Proton acceptor role is filled by His193. Thr248 is a binding site for substrate.

This sequence belongs to the LDH/MDH superfamily. LDH family. Homotetramer.

The protein localises to the cytoplasm. The catalysed reaction is (S)-lactate + NAD(+) = pyruvate + NADH + H(+). It functions in the pathway fermentation; pyruvate fermentation to lactate; (S)-lactate from pyruvate: step 1/1. Functionally, interconverts simultaneously and stereospecifically pyruvate and lactate with concomitant interconversion of NADH and NAD(+). The sequence is that of L-lactate dehydrogenase B chain (ldhb) from Anguilla rostrata (American eel).